The primary structure comprises 181 residues: Ribosome maturation factor RimP (181 aa).

The protein belongs to the RimP family.

It localises to the cytoplasm. Its function is as follows. Required for maturation of 30S ribosomal subunits. The protein is Ribosome maturation factor RimP of Mycolicibacterium smegmatis (strain ATCC 700084 / mc(2)155) (Mycobacterium smegmatis).